The primary structure comprises 454 residues: Mannosylfructose-phosphate synthase (454 aa).

This sequence belongs to the glycosyltransferase 1 family. Mg(2+) serves as cofactor. The cofactor is Mn(2+).

It catalyses the reaction beta-D-fructose 6-phosphate + GDP-alpha-D-mannose = beta-D-fructofuranosyl alpha-D-mannopyranoside 6(F)-phosphate + GDP + H(+). It participates in carbohydrate metabolism; mannosylfructose biosynthesis; beta-D-fructofuranosyl alpha-D-mannopyranoside from D-fructose 6-phosphate and GDP-alpha-D-mannose: step 1/2. This is Mannosylfructose-phosphate synthase from Agrobacterium fabrum (strain C58 / ATCC 33970) (Agrobacterium tumefaciens (strain C58)).